The following is a 110-amino-acid chain: Large ribosomal subunit protein uL22 (110 aa).

The protein belongs to the universal ribosomal protein uL22 family. Part of the 50S ribosomal subunit.

Functionally, this protein binds specifically to 23S rRNA; its binding is stimulated by other ribosomal proteins, e.g. L4, L17, and L20. It is important during the early stages of 50S assembly. It makes multiple contacts with different domains of the 23S rRNA in the assembled 50S subunit and ribosome. In terms of biological role, the globular domain of the protein is located near the polypeptide exit tunnel on the outside of the subunit, while an extended beta-hairpin is found that lines the wall of the exit tunnel in the center of the 70S ribosome. The polypeptide is Large ribosomal subunit protein uL22 (Dichelobacter nodosus (strain VCS1703A)).